The chain runs to 1058 residues: Isoleucine--tRNA ligase (1058 aa).

The short motif at 48-58 is the 'HIGH' region element; that stretch reads PYTTGHIHLGT. The 'KMSKS' region motif lies at 596-600; it reads KMSKS. Lys599 is a binding site for ATP.

The protein belongs to the class-I aminoacyl-tRNA synthetase family. IleS type 2 subfamily. In terms of assembly, monomer. Zn(2+) serves as cofactor.

The protein localises to the cytoplasm. The enzyme catalyses tRNA(Ile) + L-isoleucine + ATP = L-isoleucyl-tRNA(Ile) + AMP + diphosphate. In terms of biological role, catalyzes the attachment of isoleucine to tRNA(Ile). As IleRS can inadvertently accommodate and process structurally similar amino acids such as valine, to avoid such errors it has two additional distinct tRNA(Ile)-dependent editing activities. One activity is designated as 'pretransfer' editing and involves the hydrolysis of activated Val-AMP. The other activity is designated 'posttransfer' editing and involves deacylation of mischarged Val-tRNA(Ile). The protein is Isoleucine--tRNA ligase of Methanosarcina barkeri (strain Fusaro / DSM 804).